A 185-amino-acid chain; its full sequence is Threonylcarbamoyl-AMP synthase (185 aa).

The YrdC-like domain occupies 4-185 (SFRVQQAARE…LATGEVVRPG (182 aa)).

The protein belongs to the SUA5 family. TsaC subfamily.

The protein localises to the cytoplasm. It carries out the reaction L-threonine + hydrogencarbonate + ATP = L-threonylcarbamoyladenylate + diphosphate + H2O. Required for the formation of a threonylcarbamoyl group on adenosine at position 37 (t(6)A37) in tRNAs that read codons beginning with adenine. Catalyzes the conversion of L-threonine, HCO(3)(-)/CO(2) and ATP to give threonylcarbamoyl-AMP (TC-AMP) as the acyladenylate intermediate, with the release of diphosphate. The polypeptide is Threonylcarbamoyl-AMP synthase (Pseudomonas putida (strain GB-1)).